A 604-amino-acid polypeptide reads, in one-letter code: Sulfite reductase [NADPH] flavoprotein alpha-component (604 aa).

The Flavodoxin-like domain maps to 66–204 (VTVLSASQTG…AADGWTGRIV (139 aa)). FMN is bound by residues 72–77 (SQTGNA), 119–122 (STQG), and 155–164 (LGDSSYPNFC). A disordered region spans residues 212 to 231 (AKNRATPAPQTTPPAGLQTA). The segment covering 216–231 (ATPAPQTTPPAGLQTA) has biased composition (low complexity). The 215-residue stretch at 239-453 (ADPFPAALLA…VERNDGFRLP (215 aa)) folds into the FAD-binding FR-type domain. Residues Thr327, Gln361, 391-394 (RLYS), 409-411 (TVG), and 424-427 (GGAS) contribute to the FAD site. Residues 524 to 525 (SR), 530 to 534 (KIYVQ), and Asp566 each bind NADP(+). Tyr604 is an FAD binding site.

It belongs to the NADPH-dependent sulphite reductase flavoprotein subunit CysJ family. The protein in the N-terminal section; belongs to the flavodoxin family. In the C-terminal section; belongs to the flavoprotein pyridine nucleotide cytochrome reductase family. As to quaternary structure, alpha(8)-beta(8). The alpha component is a flavoprotein, the beta component is a hemoprotein. The cofactor is FAD. FMN is required as a cofactor.

The catalysed reaction is hydrogen sulfide + 3 NADP(+) + 3 H2O = sulfite + 3 NADPH + 4 H(+). It participates in sulfur metabolism; hydrogen sulfide biosynthesis; hydrogen sulfide from sulfite (NADPH route): step 1/1. Functionally, component of the sulfite reductase complex that catalyzes the 6-electron reduction of sulfite to sulfide. This is one of several activities required for the biosynthesis of L-cysteine from sulfate. The flavoprotein component catalyzes the electron flow from NADPH -&gt; FAD -&gt; FMN to the hemoprotein component. The chain is Sulfite reductase [NADPH] flavoprotein alpha-component from Neisseria meningitidis serogroup C / serotype 2a (strain ATCC 700532 / DSM 15464 / FAM18).